Reading from the N-terminus, the 540-residue chain is Putative BTB/POZ domain-containing protein R224 (540 aa).

Residues 16–88 (TDLELTLIDE…FYKNPIKYKN (73 aa)) enclose the BTB domain. Residues 356–376 (IFVSLLNDIIFVLSSINMYFI) traverse the membrane as a helical segment.

This sequence belongs to the mimivirus BTB/WD family.

The protein resides in the membrane. This Acanthamoeba polyphaga (Amoeba) protein is Putative BTB/POZ domain-containing protein R224.